The following is a 140-amino-acid chain: MAGLPDRDKLIRNFSRCLNWEEKYLYIIELGGQLAPLTEQQRHPENLISGCQSQVWIAMTLSAEGHVIFAGDSDAAIVKGLVAVVFILYHDLTPQQIISLDVRPFFADLALSQHLTPSRSQGLEAMIRAIRTKVANLSAH.

Cys51 functions as the Cysteine persulfide intermediate in the catalytic mechanism.

This sequence belongs to the SufE family. Homodimer. Interacts with SufS.

It is found in the cytoplasm. Its pathway is cofactor biosynthesis; iron-sulfur cluster biosynthesis. In terms of biological role, participates in cysteine desulfuration mediated by SufS. Cysteine desulfuration mobilizes sulfur from L-cysteine to yield L-alanine and constitutes an essential step in sulfur metabolism for biosynthesis of a variety of sulfur-containing biomolecules. Functions as a sulfur acceptor for SufS, by mediating the direct transfer of the sulfur atom from the S-sulfanylcysteine of SufS, an intermediate product of cysteine desulfuration process. In Yersinia pestis bv. Antiqua (strain Antiqua), this protein is Cysteine desulfuration protein SufE.